Reading from the N-terminus, the 228-residue chain is Octanoyltransferase (228 aa).

The region spanning 31 to 212 is the BPL/LPL catalytic domain; it reads GETDGILILL…KFSEVFGIHF (182 aa). Substrate-binding positions include 76–83, 143–145, and 156–158; these read RGGKITFH, AIG, and GIA. The active-site Acyl-thioester intermediate is cysteine 174.

The protein belongs to the LipB family.

Its subcellular location is the cytoplasm. It catalyses the reaction octanoyl-[ACP] + L-lysyl-[protein] = N(6)-octanoyl-L-lysyl-[protein] + holo-[ACP] + H(+). The protein operates within protein modification; protein lipoylation via endogenous pathway; protein N(6)-(lipoyl)lysine from octanoyl-[acyl-carrier-protein]: step 1/2. Catalyzes the transfer of endogenously produced octanoic acid from octanoyl-acyl-carrier-protein onto the lipoyl domains of lipoate-dependent enzymes. Lipoyl-ACP can also act as a substrate although octanoyl-ACP is likely to be the physiological substrate. In Thermoanaerobacter pseudethanolicus (strain ATCC 33223 / 39E) (Clostridium thermohydrosulfuricum), this protein is Octanoyltransferase.